A 404-amino-acid polypeptide reads, in one-letter code: Protrudin (404 aa).

Residues 1–25 (MQSSDRDLSGPEASPSVMPEVLSEC) are disordered. The Cytoplasmic portion of the chain corresponds to 1–63 (MQSSDRDLSG…LKDAGDGVRY (63 aa)). The tract at residues 1-92 (MQSSDRDLSG…LFLTLNEGAW (92 aa)) is sufficient for homooligomerization. Residues 1–205 (MQSSDRDLSG…LYLLPLCWVL (205 aa)) form a sufficient for localization to endoplasmic reticulum tubular network and for interactions with REEP1, REEP5, ATL1, ATL2, ATL3 and SPAST region. The tract at residues 51–64 (LEPLKDAGDGVRYL) is necessary for interaction with RAB11A and function in neurite outgrowth. A helical membrane pass occupies residues 64–85 (LLRWQMPLCSLLTCLGLNILFL). At 86–90 (TLNEG) the chain is on the lumenal side. A helical transmembrane segment spans residues 91–109 (AWYSVGALIISVPALLGYL). Over 110–187 (QEVCRAQLPE…NPVVSSQFYG (78 aa)) the chain is Cytoplasmic. Residues 188–208 (ALLGMVCMLYLLPLCWVLALL) constitute an intramembrane region (helical). The Cytoplasmic segment spans residues 209–404 (NSTLFLGNGE…CASCNQTLSK (196 aa)). A disordered region spans residues 259-299 (DSTPAPTPTEDLTPGSVEEAEEAEPDEEFKDAIEEDDEGTP). Residues 271 to 354 (TPGSVEEAEE…GCAATFSVLK (84 aa)) form a necessary for interaction with KIF5A region. Acidic residues predominate over residues 276-299 (EEAEEAEPDEEFKDAIEEDDEGTP). A necessary for interaction with VAPA region spans residues 286 to 292 (EFKDAIE). The FYVE-type zinc-finger motif lies at 337–403 (TNNFGNCAGC…VCASCNQTLS (67 aa)). Zn(2+) contacts are provided by C343, C346, C359, C362, C367, C370, C395, and C398.

In terms of assembly, can form homooligomers (monomers, dimers and tetramers). Interacts with FKBP8; may negatively regulate ZFYVE27 phosphorylation. Interacts with VAPA (via MSP domain); may regulate ZFYVE27 retention in the endoplasmic reticulum and its function in cell projections formation. Interacts with VAPB (via MSP domain). Interacts with RAB11A (GDP-bound form); regulates RAB11A. Interacts with RAB11B (GDP-bound form), REEP1, REEP5, ATL1, ATL2, ATL3, SPAST, SURF4, KIF5A, KIF5B, KIF5C and RTN3. Post-translationally, phosphorylated. Phosphorylation is induced by NGF through the MAPK/ERK pathway and modulates interaction with RAB11A.

The protein resides in the recycling endosome membrane. The protein localises to the endoplasmic reticulum membrane. It is found in the cell projection. Its subcellular location is the growth cone membrane. Its function is as follows. Key regulator of RAB11-dependent vesicular trafficking during neurite extension through polarized membrane transport. Promotes axonal elongation and contributes to the establishment of neuronal cell polarity. Involved in nerve growth factor-induced neurite formation in VAPA-dependent manner. Contributes to both the formation and stabilization of the tubular ER network. Involved in ER morphogenesis by regulating the sheet-to-tubule balance and possibly the density of tubule interconnections. Acts as an adapter protein that facilitates the interaction of KIF5A with VAPA, VAPB, SURF4, RAB11A, RAB11B and RTN3 and the ZFYVE27-KIF5A complex contributes to the transport of these proteins in neurons. Can induce formation of neurite-like membrane protrusions in non-neuronal cells in a KIF5A/B-dependent manner. The protein is Protrudin (Zfyve27) of Rattus norvegicus (Rat).